A 313-amino-acid chain; its full sequence is Olfactory receptor 2B6 (313 aa).

At 1 to 27 the chain is on the extracellular side; the sequence is MSWANESITGEFVLLGFSDQPWLEFPL. N5 carries N-linked (GlcNAc...) asparagine glycosylation. A helical membrane pass occupies residues 28–48; that stretch reads FVVFLTSYIVTIFGNLNIILV. Residues 49 to 57 are Cytoplasmic-facing; that stretch reads SHLDPKLHT. The helical transmembrane segment at 58–78 threads the bilayer; that stretch reads PMYFFLTNLSVIDLCYITCTV. Residues 79–97 are Extracellular-facing; it reads PQMLVNLRSIRKVISFGGC. C97 and C189 form a disulfide bridge. A helical transmembrane segment spans residues 98–118; it reads VVQLFMFLALGATECVLLPVM. At 119–143 the chain is on the cytoplasmic side; it reads SFDRFVAICRPLHYSVIMHQRLCLQ. Residues 144–164 form a helical membrane-spanning segment; that stretch reads LAAVSWIIGFGNSVWLSILTL. Residues 165–200 are Extracellular-facing; that stretch reads QLPRCGHYVIDHFLCEVPALLKLSCVDVTANEAELF. Residues 201–221 traverse the membrane as a helical segment; that stretch reads FVSVFFHLTPLSLILTSYAFI. Residues 222–244 lie on the Cytoplasmic side of the membrane; it reads ARAILKIQSAEGRQKAFGTCSSH. Residues 245-265 form a helical membrane-spanning segment; that stretch reads LIVVSLFYGTALSVYFLPPSP. The Extracellular segment spans residues 266-271; the sequence is HSKNRR. A helical transmembrane segment spans residues 272-292; sequence KMVPLFYGIIAPMLNPLIYTL. At 293–313 the chain is on the cytoplasmic side; it reads RNKEVKDAFKRLIKRVFLSKN.

Belongs to the G-protein coupled receptor 1 family.

The protein resides in the cell membrane. Functionally, odorant receptor. This is Olfactory receptor 2B6 from Mus musculus (Mouse).